The primary structure comprises 530 residues: PC4 and SFRS1-interacting protein (530 aa).

The PWWP domain occupies 1–64 (MTRDFKPGDL…PKDIFPYSEN (64 aa)). Lys-75 participates in a covalent cross-link: Glycyl lysine isopeptide (Lys-Gly) (interchain with G-Cter in SUMO2). A disordered region spans residues 86-349 (NNPKVKFSSQ…VEKKRETSMD (264 aa)). Polar residues predominate over residues 92–104 (FSSQQASTKQSNA). A phosphoserine mark is found at Ser-102, Ser-105, and Ser-106. A compositionally biased stretch (basic and acidic residues) spans 113-135 (KETSVSKEDTDHEEKASNEDVTK). 2 positions are modified to phosphothreonine: Thr-115 and Thr-122. Ser-129 bears the Phosphoserine mark. Thr-141 is modified (phosphothreonine). Positions 144–153 (AARRGRKRKA) are enriched in basic residues. The Nuclear localization signal signature appears at 146 to 156 (RRGRKRKAEKQ). The residue at position 167 (Thr-167) is a Phosphothreonine. 2 positions are modified to phosphoserine: Ser-177 and Ser-206. The segment covering 213–261 (EEDKSKKKGQEEKQPKKQLKKDEEGQKEEDKPRKEPDKKEGKKEVESKR) has biased composition (basic and acidic residues). Residue Ser-271 is modified to Phosphoserine. Phosphothreonine is present on Thr-272. Phosphoserine occurs at positions 273 and 275. Residues 274–283 (DSEEEGDDQE) are compositionally biased toward acidic residues. Over residues 287–302 (KRKGGRNFQTAHRRNM) the composition is skewed to basic residues. Basic and acidic residues predominate over residues 305–349 (GQHEKEAADRKRKQEEQMETEQQNKDEGKKPEVKKVEKKRETSMD). Coiled-coil stretches lie at residues 306 to 334 (QHEK…EGKK) and 371 to 395 (NRCI…KHTE). Residues 340–417 (VEKKRETSMD…VSQIIMEKST (78 aa)) are integrase-binding domain (IBD). Ser-434 is subject to Phosphoserine. The residue at position 437 (Thr-437) is a Phosphothreonine. Residue Ser-443 is modified to Phosphoserine. Basic and acidic residues predominate over residues 446 to 473 (EQRQHEEANKTKDQGKKGPNKKLDKEQT). The interval 446 to 530 (EQRQHEEANK…ISLKDSTLDN (85 aa)) is disordered. The segment covering 474–494 (GSKTLNGGSDAPDSNQAQHNG) has biased composition (polar residues). A compositionally biased stretch (basic and acidic residues) spans 498 to 530 (EESKDKHEASSKKKPSNEERETEISLKDSTLDN). At Arg-517 the chain carries Citrulline. Ser-522 carries the post-translational modification Phosphoserine. Thr-527 is subject to Phosphothreonine.

The protein belongs to the HDGF family. Monomer. Interacts with IFRD1/PC4. Interacts (via IBD domain) with POGZ (via IBM motif) and CDCA7L (via IBM motifs). Interacts (via IBD domain) with KMT2A (via IBM motifs) with a moderate affinity whereas interacts with the KMT2A-MEN1 complex with a greater affinity; MEN1 enhances interaction of KMT2A with PSIP1. Interacts (via IBD domain) with IWS1 (via IBM motif), MED1 (via IBM motif) and DBF4 (via IBM motifs). As to quaternary structure, (Microbial infection) Interacts (via IBD domain) with feline immunodeficiency virus (FIV) integrase (IN), determining its nuclear localization, its tight association with chromatin and its protection from the proteasome. In terms of processing, citrullinated by PADI4.

The protein localises to the nucleus. Its function is as follows. Transcriptional coactivator involved in neuroepithelial stem cell differentiation and neurogenesis. Involved in particular in lens epithelial cell gene regulation and stress responses. May play an important role in lens epithelial to fiber cell terminal differentiation. May play a protective role during stress-induced apoptosis. This chain is PC4 and SFRS1-interacting protein (PSIP1), found in Felis catus (Cat).